A 204-amino-acid polypeptide reads, in one-letter code: Synaptosomal-associated protein 25-A (204 aa).

Residues 1 to 11 (MAEDSDMRNEL) show a composition bias toward basic and acidic residues. Residues 1–25 (MAEDSDMRNELADMQQRADQLADES) are disordered. 2 t-SNARE coiled-coil homology domains span residues 19–81 (DQLA…LNDL) and 138–200 (DARE…ATKM).

This sequence belongs to the SNAP-25 family. As to expression, expressed in several regions throughout the adult brain, including the mesencephalon.

The protein resides in the synapse. Its subcellular location is the synaptosome. The protein localises to the cell membrane. May play an important role in the synaptic function of specific neuronal systems. Associates with proteins involved in vesicle docking and membrane fusion. The polypeptide is Synaptosomal-associated protein 25-A (Danio rerio (Zebrafish)).